We begin with the raw amino-acid sequence, 309 residues long: Homoserine kinase (309 aa).

91–101 (PLARGLGSSAA) lines the ATP pocket.

This sequence belongs to the GHMP kinase family. Homoserine kinase subfamily.

The protein localises to the cytoplasm. The enzyme catalyses L-homoserine + ATP = O-phospho-L-homoserine + ADP + H(+). It functions in the pathway amino-acid biosynthesis; L-threonine biosynthesis; L-threonine from L-aspartate: step 4/5. Functionally, catalyzes the ATP-dependent phosphorylation of L-homoserine to L-homoserine phosphate. The protein is Homoserine kinase of Bacillus velezensis (strain DSM 23117 / BGSC 10A6 / LMG 26770 / FZB42) (Bacillus amyloliquefaciens subsp. plantarum).